A 285-amino-acid polypeptide reads, in one-letter code: MSDEVQPGFVRVRLDLSYDGTEFSGWAKQAAGRRTVQGEIEDALRTVTRSGETTYELTVAGRTDAGVHARGQVAHVDLPGELWAEHQEKLLKRLAGRLPKDVRVWSLTEAPSGFNARFSAIWRRYAYRVTDNTGGVDPLLRSHVLWHDWPLDVDAMNEAARRLVGEHDFAAYCKKREGATTIRTLQELSLVRGDDGVITATVCADAFCHNMVRSLIGALLFVGDGHRGPDWPGKVLAVGVRDSAVHVVRPHGLTLEEVGYPADELLAARNKEARNKRTLPAAGCC.

Catalysis depends on Asp-64, which acts as the Nucleophile. Substrate is bound at residue Tyr-125.

This sequence belongs to the tRNA pseudouridine synthase TruA family. Homodimer.

It carries out the reaction uridine(38/39/40) in tRNA = pseudouridine(38/39/40) in tRNA. Functionally, formation of pseudouridine at positions 38, 39 and 40 in the anticodon stem and loop of transfer RNAs. The protein is tRNA pseudouridine synthase A of Streptomyces avermitilis (strain ATCC 31267 / DSM 46492 / JCM 5070 / NBRC 14893 / NCIMB 12804 / NRRL 8165 / MA-4680).